The primary structure comprises 807 residues: Carbamoyltransferase HypF2 (807 aa).

Positions 14 to 101 (RIRIRVRGVV…VDADGFAILE (88 aa)) constitute an Acylphosphatase-like domain. 2 consecutive C4-type zinc fingers follow at residues 120–145 (CPDCLAELFDPANRRYRYAFINCTQC) and 170–195 (CRPCLDEYNAPEHRRFHAEPNACPDC). The region spanning 212 to 415 (VDPIAETVAR…HVQFIRRARG (204 aa)) is the YrdC-like domain. The interval 663 to 682 (WGEQPSPGRPKTVAHSLGGV) is disordered.

Belongs to the carbamoyltransferase HypF family.

The enzyme catalyses C-terminal L-cysteinyl-[HypE protein] + carbamoyl phosphate + ATP + H2O = C-terminal S-carboxamide-L-cysteinyl-[HypE protein] + AMP + phosphate + diphosphate + H(+). Its pathway is protein modification; [NiFe] hydrogenase maturation. Its function is as follows. Involved in the maturation of [NiFe] hydrogenases. Along with HypE, it catalyzes the synthesis of the CN ligands of the active site iron of [NiFe]-hydrogenases. HypF functions as a carbamoyl transferase using carbamoylphosphate as a substrate and transferring the carboxamido moiety in an ATP-dependent reaction to the thiolate of the C-terminal cysteine of HypE yielding a protein-S-carboxamide. The chain is Carbamoyltransferase HypF2 (hypF2) from Cupriavidus necator (strain ATCC 17699 / DSM 428 / KCTC 22496 / NCIMB 10442 / H16 / Stanier 337) (Ralstonia eutropha).